The sequence spans 637 residues: Chaperone protein HtpG (637 aa).

The segment at 1–345 (MSQQETHGFQ…SNDLPLNVSR (345 aa)) is a; substrate-binding. Residues 346-562 (EILQDNHVTK…DGEMSTQMIK (217 aa)) form a b region. Positions 563–637 (LMQAAGQPVP…MNQMLLANMK (75 aa)) are c.

It belongs to the heat shock protein 90 family. As to quaternary structure, homodimer.

It localises to the cytoplasm. Molecular chaperone. Has ATPase activity. This is Chaperone protein HtpG from Shewanella baltica (strain OS155 / ATCC BAA-1091).